Consider the following 215-residue polypeptide: CASP-like protein 1E1 (215 aa).

Over M1–C51 the chain is Cytoplasmic. A helical membrane pass occupies residues C52–A72. At D73–S103 the chain is on the extracellular side. The helical transmembrane segment at A104–A124 threads the bilayer. Residues A125–S130 lie on the Cytoplasmic side of the membrane. Residues A131–G151 form a helical membrane-spanning segment. The Extracellular segment spans residues A152–A185. The helical transmembrane segment at A186–L206 threads the bilayer. Residues T207–Y215 are Cytoplasmic-facing.

This sequence belongs to the Casparian strip membrane proteins (CASP) family. As to quaternary structure, homodimer and heterodimers.

It localises to the cell membrane. The chain is CASP-like protein 1E1 from Oryza sativa subsp. japonica (Rice).